Here is a 160-residue protein sequence, read N- to C-terminus: Twist-related protein 2 (160 aa).

Residues Met-1–Glu-63 form a disordered region. Basic residues predominate over residues Lys-27–Lys-37. In terms of domain architecture, bHLH spans Ser-66–Leu-117.

As to quaternary structure, efficient DNA binding requires dimerization with another bHLH protein. Forms a heterodimer with TCF3/E12. Also interacts with MEF2C. In terms of tissue distribution, expressed at low levels in sclerotome and dermatome of somites, and in limb buds at 10.5 dpc. Accumulates predominantly in dermatome, prevertebrae and derivatives of branchial arches by 13 dpc. Also expressed near surface of embryo and in chondrogenic cells. In adult, expressed at low levels in skin, bladder, uterus, aorta and heart.

It is found in the nucleus. It localises to the cytoplasm. Binds to the E-box consensus sequence 5'-CANNTG-3' as a heterodimer and inhibits transcriptional activation by MYOD1, MYOG, MEF2A and MEF2C. Also represses expression of pro-inflammatory cytokines such as TNFA and IL1B. Involved in postnatal glycogen storage and energy metabolism. Inhibits the premature or ectopic differentiation of preosteoblast cells during osteogenesis, possibly by changing the internal signal transduction response of osteoblasts to external growth factors. The chain is Twist-related protein 2 (Twist2) from Mus musculus (Mouse).